We begin with the raw amino-acid sequence, 346 residues long: tRNA pseudouridine synthase D (346 aa).

The active-site Nucleophile is aspartate 81. One can recognise a TRUD domain in the interval glycine 157 to leucine 303.

The protein belongs to the pseudouridine synthase TruD family.

It carries out the reaction uridine(13) in tRNA = pseudouridine(13) in tRNA. Responsible for synthesis of pseudouridine from uracil-13 in transfer RNAs. The chain is tRNA pseudouridine synthase D from Stutzerimonas stutzeri (strain A1501) (Pseudomonas stutzeri).